A 406-amino-acid polypeptide reads, in one-letter code: Argininosuccinate synthase (406 aa).

ATP contacts are provided by residues 10 to 18 (AYSGGLDTS) and Ala-37. L-citrulline-binding residues include Tyr-88 and Ser-93. Gly-118 provides a ligand contact to ATP. L-aspartate contacts are provided by Thr-120, Asn-124, and Asp-125. Position 124 (Asn-124) interacts with L-citrulline. 5 residues coordinate L-citrulline: Arg-128, Ser-179, Ser-188, Glu-264, and Tyr-276.

This sequence belongs to the argininosuccinate synthase family. Type 1 subfamily. As to quaternary structure, homotetramer.

Its subcellular location is the cytoplasm. The enzyme catalyses L-citrulline + L-aspartate + ATP = 2-(N(omega)-L-arginino)succinate + AMP + diphosphate + H(+). It functions in the pathway amino-acid biosynthesis; L-arginine biosynthesis; L-arginine from L-ornithine and carbamoyl phosphate: step 2/3. The protein is Argininosuccinate synthase of Dinoroseobacter shibae (strain DSM 16493 / NCIMB 14021 / DFL 12).